A 198-amino-acid chain; its full sequence is Small ribosomal subunit protein uS7 (198 aa).

It belongs to the universal ribosomal protein uS7 family. As to quaternary structure, part of the 30S ribosomal subunit.

One of the primary rRNA binding proteins, it binds directly to 16S rRNA where it nucleates assembly of the head domain of the 30S subunit. Is located at the subunit interface close to the decoding center. The sequence is that of Small ribosomal subunit protein uS7 from Desulfurococcus mucosus (Desulfurococcus mobilis).